The sequence spans 527 residues: Pentatricopeptide repeat-containing protein At5g41170, mitochondrial (527 aa).

A mitochondrion-targeting transit peptide spans 1 to 35 (MAMRFFQLHRNRLVKGNSGKALSFSRLLDLSFWVR). 14 PPR repeats span residues 36–70 (AFCNYREILRNGLHSLQFNEALDLFTHMVESRPLP), 71–105 (SIIDFTKLLNVIAKMKKFDVVINLCDHLQIMGVSH), 106–140 (DLYTCNLLMNCFCQSSQPYLASSFLGKMMKLGFEP), 141–175 (DIVTFTSLINGFCLGNRMEEAMSMVNQMVEMGIKP), 176–210 (DVVMYTTIIDSLCKNGHVNYALSLFDQMENYGIRP), 211–245 (DVVMYTSLVNGLCNSGRWRDADSLLRGMTKRKIKP), 246–280 (DVITFNALIDAFVKEGKFLDAEELYNEMIRMSIAP), 281–315 (NIFTYTSLINGFCMEGCVDEARQMFYLMETKGCFP), 316–350 (DVVAYTSLINGFCKCKKVDDAMKIFYEMSQKGLTG), 351–385 (NTITYTTLIQGFGQVGKPNVAQEVFSHMVSRGVPP), 386–420 (NIRTYNVLLHCLCYNGKVKKALMIFEDMQKREMDG), 424–458 (NIWTYNVLLHGLCYNGKLEKALMVFEDMRKREMDI), 459–493 (GIITYTIIIQGMCKAGKVKNAVNLFCSLPSKGVKP), and 494–527 (NVVTYTTMISGLFREGLKHEAHVLFRKMKEDGVS).

Belongs to the PPR family. P subfamily.

Its subcellular location is the mitochondrion. This chain is Pentatricopeptide repeat-containing protein At5g41170, mitochondrial, found in Arabidopsis thaliana (Mouse-ear cress).